A 144-amino-acid polypeptide reads, in one-letter code: Acidic phospholipase A2 S15-109 (144 aa).

Residues 1–19 form the signal peptide; that stretch reads MYPAHLLVLLAVCVSLLGA. The propeptide occupies 20-27; that stretch reads SDIPPQPL. Cystine bridges form between C38–C98, C54–C143, C56–C72, C71–C126, C78–C119, C87–C112, and C105–C117. Ca(2+) contacts are provided by Y55, G57, and G59. The active site involves H75. Residue D76 coordinates Ca(2+). D120 is a catalytic residue.

This sequence belongs to the phospholipase A2 family. Group I subfamily. D49 sub-subfamily. Ca(2+) serves as cofactor. In terms of tissue distribution, expressed by the venom gland.

The protein resides in the secreted. The enzyme catalyses a 1,2-diacyl-sn-glycero-3-phosphocholine + H2O = a 1-acyl-sn-glycero-3-phosphocholine + a fatty acid + H(+). Functionally, snake venom phospholipase A2 (PLA2) that inhibits collagen-induced platelet aggregation. PLA2 catalyzes the calcium-dependent hydrolysis of the 2-acyl groups in 3-sn-phosphoglycerides. This chain is Acidic phospholipase A2 S15-109, found in Austrelaps superbus (Lowland copperhead snake).